A 353-amino-acid chain; its full sequence is Protein pelota homolog (353 aa).

Belongs to the eukaryotic release factor 1 family. Pelota subfamily. In terms of assembly, monomer. The cofactor is a divalent metal cation.

The protein localises to the cytoplasm. May function in recognizing stalled ribosomes, interact with stem-loop structures in stalled mRNA molecules, and effect endonucleolytic cleavage of the mRNA. May play a role in the release non-functional ribosomes and degradation of damaged mRNAs. Has endoribonuclease activity. This Methanothermobacter thermautotrophicus (strain ATCC 29096 / DSM 1053 / JCM 10044 / NBRC 100330 / Delta H) (Methanobacterium thermoautotrophicum) protein is Protein pelota homolog.